We begin with the raw amino-acid sequence, 62 residues long: LTCVTGKSIGGISTEECAAGQKRCFKKWTKMGPKLYDVSRGCTATCPKADEYGCVKCCNIDK.

Cystine bridges form between cysteine 3/cysteine 24, cysteine 17/cysteine 42, and cysteine 46/cysteine 57.

Belongs to the three-finger toxin family. Short-chain subfamily. Aminergic toxin sub-subfamily. In terms of assembly, heterodimer of C8S2 chain 1 and chain 2 (AC P01411); disulfide-linked. In terms of tissue distribution, expressed by the venom gland.

It localises to the secreted. Functionally, this protein shows a synergetic toxic effect in that it enhances the toxicity of other toxins. The protein is Synergistic-type venom protein C8S2, chain 1 of Dendroaspis angusticeps (Eastern green mamba).